The primary structure comprises 3419 residues: Genome polyprotein (3419 aa).

A disordered region spans residues 1-25; sequence MKNPKEEIRRIRIVNMLKRGVARVN. The Cytoplasmic segment spans residues 1–104; it reads MKNPKEEIRR…INARKERKRR (104 aa). Residues 37–72 are hydrophobic; homodimerization of capsid protein C; it reads LLLGHGPIRMVLAILAFLRFTAIKPSLGLINRWGSV. Residues 105 to 122 constitute a propeptide, ER anchor for capsid protein C, removed in mature form by serine protease NS3; that stretch reads GADTSIGIIGLLLTTAMA. Residues 105–125 form a helical membrane-spanning segment; the sequence is GADTSIGIIGLLLTTAMAAEI. Residues 126–249 lie on the Extracellular side of the membrane; that stretch reads TRRGSAYYMY…YTKHLIKVEN (124 aa). Asn192 is a glycosylation site (N-linked (GlcNAc...) asparagine; by host). The chain crosses the membrane as a helical span at residues 250–269; it reads WIFRNPGFALVAVAIAWLLG. The Cytoplasmic portion of the chain corresponds to 270–274; the sequence is SSTSQ. Residues 275–290 traverse the membrane as a helical segment; that stretch reads KVIYLVMILLIAPAYS. Residues 291–741 are Extracellular-facing; sequence IRCIGVSNRD…HQIFGAAFKS (451 aa). Cys293 and Cys320 are oxidised to a cystine. Lys328 is covalently cross-linked (Glycyl lysine isopeptide (Lys-Gly) (interchain with G-Cter in ubiquitin)). Disulfide bonds link Cys350/Cys406, Cys350/Cys411, Cys364/Cys395, Cys382/Cys406, Cys382/Cys411, Cys476/Cys577, and Cys594/Cys625. A fusion peptide region spans residues 388–401; sequence DRGWGNGCGLFGKG. Lys567 is covalently cross-linked (Glycyl lysine isopeptide (Lys-Gly) (interchain with G-Cter in ubiquitin)). Residues 742–763 traverse the membrane as a helical segment; the sequence is LFGGMSWFSQILIGTLLVWLGL. Residues 764-769 lie on the Cytoplasmic side of the membrane; sequence NTKNGS. Residues 770 to 790 form a helical membrane-spanning segment; sequence ISLTCLALGGVMIFLSTAVSA. The Lumenal portion of the chain corresponds to 791–1173; sequence DVGCSVDFSK…EGLKKRMTTK (383 aa). Disulfide bonds link Cys794-Cys805, Cys845-Cys933, Cys969-Cys1013, Cys1070-Cys1119, Cys1081-Cys1102, and Cys1103-Cys1106. Asn920 and Asn997 each carry an N-linked (GlcNAc...) asparagine; by host glycan. Residues 1174-1194 form a helical membrane-spanning segment; the sequence is IIMSTSMAVLVVMILGGFSMS. The Cytoplasmic segment spans residues 1195 to 1216; that stretch reads DLAKLVILMGATFAEMNTGGDV. Residues 1217–1237 form a helical membrane-spanning segment; that stretch reads AHLALVAAFKVRPALLVSFIF. Residues 1238–1266 lie on the Lumenal side of the membrane; sequence RANWTPRESMLLALASCLLQTAISALEGD. Residues 1267-1287 form a helical membrane-spanning segment; sequence LMVLINGFALAWLAIRAMAVP. At 1288–1291 the chain is on the cytoplasmic side; it reads RTDN. A helical transmembrane segment spans residues 1292–1312; that stretch reads IALPILAALTPLARGTLLVAW. The Lumenal segment spans residues 1313 to 1341; the sequence is RAGLATCGGIMLLSLKGKGSVKKNLPFVM. The helical transmembrane segment at 1342–1362 threads the bilayer; that stretch reads ALGLTAVRVVDPINVVGLLLL. Residues 1363 to 1369 are Cytoplasmic-facing; the sequence is TRSGKRS. Residues 1370 to 1390 traverse the membrane as a helical segment; sequence WPPSEVLTAVGLICALAGGFA. The Lumenal portion of the chain corresponds to 1391 to 1393; it reads KAD. A helical membrane pass occupies residues 1394-1414; it reads IEMAGPMAAVGLLIVSYVVSG. Residues 1415–1468 are Cytoplasmic-facing; sequence KSVDMYIERAGDITWEKDAEVTGNSPRLDVALDESGDFSLVEEDGPPMREIILK. An interacts with and activates NS3 protease region spans residues 1421–1460; it reads IERAGDITWEKDAEVTGNSPRLDVALDESGDFSLVEEDGP. The disordered stretch occupies residues 1425 to 1447; the sequence is GDITWEKDAEVTGNSPRLDVALD. The helical intramembrane region spans 1469–1489; the sequence is VVLMAICGMNPIAIPFAAGAW. At 1490-2166 the chain is on the lumenal side; the sequence is YVYVKTGKRS…KAAAAQLPET (677 aa). Residues 1499–1676 enclose the Peptidase S7 domain; the sequence is SGALWDVPAP…KREEETPVEC (178 aa). Catalysis depends on charge relay system; for serine protease NS3 activity residues His1549, Asp1573, and Ser1633. The 157-residue stretch at 1679 to 1835 folds into the Helicase ATP-binding domain; the sequence is PSMLKKKQLT…DSNSPIMDTE (157 aa). The important for RNA-binding stretch occupies residues 1683-1686; that stretch reads KKKQ. 1692–1699 lines the ATP pocket; the sequence is LHPGAGKT. Residues 1783–1786 carry the DEAH box motif; sequence DEAH. The Helicase C-terminal domain occupies 1830-2009; the sequence is PIMDTEVEVP…GLIASLYRPE (180 aa). Lys1887 bears the N6-acetyllysine; by host mark. The chain crosses the membrane as a helical span at residues 2167-2187; that stretch reads LETIMLLGLLGTVSLGIFFVL. Topologically, residues 2188 to 2191 are lumenal; it reads MRNK. An intramembrane region (helical) is located at residues 2192–2212; that stretch reads GIGKMGFGMVTLGASAWLMWL. Over 2213–2214 the chain is Cytoplasmic; that stretch reads SE. The helical transmembrane segment at 2215–2235 threads the bilayer; the sequence is IEPARIACVLIVVFLLLVVLI. Topologically, residues 2236–2250 are lumenal; sequence PEPEKQRSPQDNQMA. The segment at residues 2251–2265 is an intramembrane region (helical); it reads IIIMVAVGLLGLITA. At 2266-2303 the chain is on the lumenal side; that stretch reads NELGWLERTKNDIAHLMGRREEGATMGFSMDIDLRPAS. The segment at residues 2304-2324 is an intramembrane region (helical); the sequence is AWAIYAALTTLITPAVQHAVT. The Lumenal portion of the chain corresponds to 2325–2340; the sequence is TSYNNYSLMAMATQAG. Residues 2341-2361 traverse the membrane as a helical segment; the sequence is VLFGMGKGMPFMHGDLGVPLL. Over 2362 to 2371 the chain is Cytoplasmic; that stretch reads MMGCYSQLTP. Residues 2372 to 2392 form a helical membrane-spanning segment; it reads LTLIVAIILLVAHYMYLIPGL. Residues 2393–2437 are Lumenal-facing; sequence QAAAARAAQKRTAAGIMKNPVVDGIVVTDIDTMTIDPQVEKKMGQ. Residues 2438–2458 form a helical membrane-spanning segment; sequence VLLIAVAISSAVLLRTAWGWG. Over 2459 to 3419 the chain is Cytoplasmic; the sequence is EAGALITAAT…GEEGSTPGVL (961 aa). An mRNA cap 0-1 NS5-type MT domain is found at 2517–2781; that stretch reads GGGTGETLGE…DVNLGSGTRA (265 aa). Residues Lys2529, Leu2532, Asn2533, Met2535, Phe2540, and Lys2544 each contribute to the mRNA site. 2529-2535 is a GTP binding site; that stretch reads KARLNQM. Ser2572 contacts S-adenosyl-L-methionine. Ser2572 is subject to Phosphoserine. The active-site For 2'-O-MTase activity is the Lys2577. The interval 2593–2596 is SUMO-interacting motif (SIM); sequence VVDL. S-adenosyl-L-methionine is bound by residues Gly2602, Trp2603, Thr2620, Lys2621, His2626, Glu2627, Asp2647, Val2648, Asp2662, and Ile2663. Asp2662 serves as the catalytic For 2'-O-MTase activity. 2665–2671 lines the GTP pocket; the sequence is ESSSSPE. MRNA is bound at residue Ser2666. Lys2698 (for 2'-O-MTase activity) is an active-site residue. MRNA is bound by residues Arg2729 and Ser2731. 2729 to 2731 is a GTP binding site; sequence RNS. Residue Glu2734 is the For 2'-O-MTase activity of the active site. Residue Tyr2736 participates in S-adenosyl-L-methionine binding. A Nuclear localization signal (NLS) motif is present at residues 2904 to 2910; sequence KRKRPRV. Positions 2955, 2959, 2964, and 2967 each coordinate Zn(2+). The RdRp catalytic domain occupies 3045-3195; it reads GKMYADDTAG…KPIDDRFAHA (151 aa). His3230, Cys3246, and Cys3365 together coordinate Zn(2+).

This sequence in the N-terminal section; belongs to the class I-like SAM-binding methyltransferase superfamily. mRNA cap 0-1 NS5-type methyltransferase family. Homodimer. Interacts with host SERTAD3; this interaction promotes capsid protein C degradation. Interacts with host CAPRIN1; this interaction is probably linked to the inhibition of stress granules formation by the virus. Interacts with host G3BP1; this interaction is probably linked to the inhibition of stress granules formation by the virus. As to quaternary structure, forms heterodimers with envelope protein E in the endoplasmic reticulum and Golgi. Interacts with non-structural protein 2A. In terms of assembly, homodimer; in the endoplasmic reticulum and Golgi. Interacts with host TYRO3, AXL and DC-SIGN proteins. Interacts with non-structural protein 2A. Interacts with host HAVCR1; this interaction likely mediates virus attachment to host cell. Interacts with host NCAM1. Interacts with host HSPA5. Interacts with Aedes aegypti SRPN25, APY and venom allergen-1 salivary proteins; the interactions do not affect Zika virus replication in human endothelial cells and keratinocytes. Homodimer; Homohexamer when secreted. Interacts with host TBK1. Interacts with host USP8. Interacts with envelope protein E. Interacts with host HSPA5. As to quaternary structure, interacts with the structural protein prM/E complex, and the NS2B/NS3 protease complex. In terms of assembly, forms a heterodimer with serine protease NS3. May form homooligomers. Interacts with human SPCS1. Interacts with non-structural protein 2A. Forms a heterodimer with NS2B. Interacts with NS4B. Interacts with unphosphorylated RNA-directed RNA polymerase NS5; this interaction stimulates RNA-directed RNA polymerase NS5 guanylyltransferase activity. Interacts with non-structural protein 2A. Interacts with host SHFL; this interaction promotes NS3 degradation via a lysosome-dependent pathway. Interacts with host CEP63; this interaction disorganizes the centrosome and inhibits host innate immune response. As to quaternary structure, may interact with host ANKLE2; the interaction may cause defects in brain development, such as microcephaly. May interact with host SRPRA and SEC61G. In terms of assembly, interacts with serine protease NS3. Interacts with NS1. Interacts with host TBK1. Homodimer. Interacts with host STAT2; this interaction inhibits the phosphorylation of the latter, and, when all viral proteins are present (polyprotein), targets STAT2 for degradation. Interacts with host TBK1 and IKBKE; these interactions lead to the inhibition of the host RIG-I signaling pathway. Interacts with host KPNA2. Interacts with host PAF1 complex; the interaction may prevent the recruitment of the host PAF1 complex to interferon-responsive genes, and thus reduces the immune response. Interacts with serine protease NS3. Interacts with host ZSWIM8; this interaction allows STAT2 binding to ZSWIM8 and subsequent proteasomal degradation leading to inhibition of interferon signaling. Specific enzymatic cleavages in vivo yield mature proteins. Cleavages in the lumen of endoplasmic reticulum are performed by host signal peptidase, whereas cleavages in the cytoplasmic side are performed by serine protease NS3. Signal cleavage at the 2K-4B site requires a prior NS3 protease-mediated cleavage at the 4A-2K site. In terms of processing, cleaved in post-Golgi vesicles by a host furin, releasing the mature small envelope protein M, and peptide pr. This cleavage is incomplete as up to 30% of viral particles still carry uncleaved prM. Post-translationally, N-glycosylation plays a role in virulence in mammalian and mosquito hosts, but may have no effect on neurovirulence. Ubiquitination by host TRIM7 promotes virus attachment and fusion of the virus and the host endosome membrane. In terms of processing, N-glycosylated. The excreted form is glycosylated, which is required for efficient secretion of the protein from infected cells. Post-translationally, acetylated by host KAT5. Acetylation modulates NS3 RNA-binding and unwinding activities and plays an important positive role for viral replication. Phosphorylated on serines residues. This phosphorylation may trigger NS5 nuclear localization. In terms of processing, sumoylated, required for regulating IFN induced interferon stimulated genes/ISGs.

It localises to the virion. It is found in the host nucleus. The protein localises to the host cytoplasm. Its subcellular location is the host perinuclear region. The protein resides in the secreted. It localises to the virion membrane. It is found in the host endoplasmic reticulum membrane. The enzyme catalyses Selective hydrolysis of -Xaa-Xaa-|-Yaa- bonds in which each of the Xaa can be either Arg or Lys and Yaa can be either Ser or Ala.. It catalyses the reaction RNA(n) + a ribonucleoside 5'-triphosphate = RNA(n+1) + diphosphate. It carries out the reaction a ribonucleoside 5'-triphosphate + H2O = a ribonucleoside 5'-diphosphate + phosphate + H(+). The catalysed reaction is ATP + H2O = ADP + phosphate + H(+). The enzyme catalyses a 5'-end (5'-triphosphoguanosine)-ribonucleoside in mRNA + S-adenosyl-L-methionine = a 5'-end (N(7)-methyl 5'-triphosphoguanosine)-ribonucleoside in mRNA + S-adenosyl-L-homocysteine. It catalyses the reaction a 5'-end (N(7)-methyl 5'-triphosphoguanosine)-ribonucleoside in mRNA + S-adenosyl-L-methionine = a 5'-end (N(7)-methyl 5'-triphosphoguanosine)-(2'-O-methyl-ribonucleoside) in mRNA + S-adenosyl-L-homocysteine + H(+). Plays a role in virus budding by binding to the host cell membrane and packages the viral RNA into a nucleocapsid that forms the core of the mature virus particle. During virus entry, may induce genome penetration into the host cytoplasm after hemifusion induced by the surface proteins. Can migrate to the cell nucleus where it modulates host functions. Inhibits the integrated stress response (ISR) in the infected cell. Its function is as follows. Inhibits RNA silencing by interfering with host Dicer. Functionally, prevents premature fusion activity of envelope proteins in trans-Golgi by binding to envelope protein E at pH 6.0. After virion release in extracellular space, gets dissociated from E dimers. In terms of biological role, plays a role in host immune defense modulation and protection of envelope protein E during virion synthesis. PrM-E cleavage is inefficient, many virions are only partially matured and immature prM-E proteins could play a role in immune evasion. Contributes to fetal microcephaly in humans. Acts as a chaperone for envelope protein E during intracellular virion assembly by masking and inactivating envelope protein E fusion peptide. prM is the only viral peptide matured by host furin in the trans-Golgi network probably to avoid catastrophic activation of the viral fusion activity in acidic Golgi compartment prior to virion release. May play a role in virus budding. Exerts cytotoxic effects by activating a mitochondrial apoptotic pathway through M ectodomain. May display a viroporin activity. Its function is as follows. Binds to host cell surface receptors and mediates fusion between viral and cellular membranes. Efficient virus attachment to cell is, at least in part, mediated by host HAVCR1 in a cell-type specific manner. In addition, host NCAM1 can also be used as entry receptor. Interaction with host HSPA5 plays an important role in the early stages of infection as well. Envelope protein is synthesized in the endoplasmic reticulum and forms a heterodimer with protein prM. The heterodimer plays a role in virion budding in the ER, and the newly formed immature particle is covered with 60 spikes composed of heterodimers between precursor prM and envelope protein E. The virion is transported to the Golgi apparatus where the low pH causes the dissociation of PrM-E heterodimers and formation of E homodimers. PrM-E cleavage is inefficient, many virions are only partially matured and immature prM-E proteins could play a role in immune evasion. Functionally, plays a role in the inhibition of host RLR-induced interferon-beta activation by targeting TANK-binding kinase 1/TBK1. In addition, recruits the host deubiquitinase USP8 to cleave 'Lys-11'-linked polyubiquitin chains from caspase-1/CASP1 thus inhibiting its proteasomal degradation. In turn, stabilized CASP1 promotes cleavage of cGAS, which inhibits its ability to recognize mitochondrial DNA release and initiate type I interferon signaling. In terms of biological role, component of the viral RNA replication complex that recruits genomic RNA, the structural protein prM/E complex, and the NS2B/NS3 protease complex to the virion assembly site and orchestrates virus morphogenesis. Antagonizes also the host MDA5-mediated induction of alpha/beta interferon antiviral response. May disrupt adherens junction formation and thereby impair proliferation of radial cells in the host cortex. Required cofactor for the serine protease function of NS3. Its function is as follows. Displays three enzymatic activities: serine protease, NTPase and RNA helicase. NS3 serine protease, in association with NS2B, performs its autocleavage and cleaves the polyprotein at dibasic sites in the cytoplasm: C-prM, NS2A-NS2B, NS2B-NS3, NS3-NS4A, NS4A-2K and NS4B-NS5. NS3 RNA helicase binds RNA and unwinds dsRNA in the 3' to 5' direction. Leads to translation arrest when expressed ex vivo. Disrupts host centrosome organization in a CEP63-dependent manner to degrade host TBK1 and inhibits innate immune response. Inhibits the integrated stress response (ISR) in the infected cell. Functionally, regulates the ATPase activity of the NS3 helicase activity. NS4A allows NS3 helicase to conserve energy during unwinding. Cooperatively with NS4B suppresses the Akt-mTOR pathway and leads to cellular dysregulation. By inhibiting host ANKLE2 functions, may cause defects in brain development, such as microcephaly. Also antagonizes the host MDA5-mediated induction of alpha/beta interferon antiviral response. Inhibits the integrated stress response (ISR) in the infected cell. In terms of biological role, functions as a signal peptide for NS4B and is required for the interferon antagonism activity of the latter. Induces the formation of ER-derived membrane vesicles where the viral replication takes place. Also plays a role in the inhibition of host RLR-induced interferon-beta production at TANK-binding kinase 1/TBK1 level. Cooperatively with NS4A suppresses the Akt-mTOR pathway and leads to cellular dysregulation. Its function is as follows. Replicates the viral (+) and (-) RNA genome, and performs the capping of genomes in the cytoplasm. Methylates viral RNA cap at guanine N-7 and ribose 2'-O positions. Once sufficient NS5 is expressed, binds to the cap-proximal structure and inhibits further translation of the viral genome. Besides its role in RNA genome replication, also prevents the establishment of a cellular antiviral state by blocking the interferon-alpha/beta (IFN-alpha/beta) signaling pathway. Mechanistically, interferes with host kinases TBK1 and IKKE upstream of interferon regulatory factor 3/IRF3 to inhibit the RIG-I pathway. Also antagonizes type I interferon signaling by targeting STAT2 for degradation by the proteasome thereby preventing activation of JAK-STAT signaling pathway. Mechanistically, acts as a scaffold protein to connect host ZSWIM8/CUL3 ligase complex and STAT2, leading to STAT2 degradation. Within the host nucleus, disrupts host SUMO1 and STAT2 co-localization with PML, resulting in PML degradation. May also reduce immune responses by preventing the recruitment of the host PAF1 complex to interferon-responsive genes. The chain is Genome polyprotein from Aedes aegypti (Yellowfever mosquito).